Consider the following 172-residue polypeptide: Scytalone dehydratase (172 aa).

Substrate-binding residues include Y30, Y50, and F53. Residues H85 and H110 contribute to the active site. Substrate is bound at residue N131.

Belongs to the scytalone dehydratase family. Homotrimer. Each subunit contains an active site, located in the central part of the hydrophobic core of the monomer, which functions independently.

The protein localises to the endosome. The catalysed reaction is scytalone = 1,3,8-trihydroxynaphthalene + H2O. Its pathway is pigment biosynthesis; melanin biosynthesis. With respect to regulation, (N-phenoxypropyl)-carboxamides such as carpropamid and derivatives of norephedrine act as inhibitors of scytalone dehydratase activity. In terms of biological role, scytalone dehydratase; part of the gene cluster that mediates the biosynthesis of dihydroxynaphthalene melanin, a bluish-green pigment and a structural component of the conidial wall. Within the pathway, catalyzes the dehydration of scytalone as well as of vermelone. Is also able to dehydrate the alternate substrate 2,3-dihydro-2,5-dihydroxy-4H-benzopyran-4-one (DDBO) to 5-hydroxy-4H-1-benzopyran-4-one (HBO). The protein is Scytalone dehydratase (SDH1) of Pyricularia oryzae (strain 70-15 / ATCC MYA-4617 / FGSC 8958) (Rice blast fungus).